The primary structure comprises 132 residues: MIRFILLQNRQGKTRLAKYYVPLEDSEKHKVEYEVHRLVVNRDPKFTNFVEFRTHKVIYRRYAGLFFSICVDITDNELAYLECIHLFVEILDHFFSNVCELDLVFNFHKVYRYLILDEFILAGELQETSKRQ.

The protein belongs to the adaptor complexes small subunit family. In terms of assembly, adaptor protein complex 2 (AP-2) is a heterotetramer composed of two large adaptins (alpha-type and beta-type subunits), a medium adaptin (mu-type subunit AP50) and a small adaptin (sigma-type subunit AP17). In terms of tissue distribution, widely expressed in the embryo, endosperm, leaf and root.

The protein localises to the cell membrane. Its subcellular location is the membrane. The protein resides in the coated pit. Functionally, component of the adaptor complexes which link clathrin to receptors in coated vesicles. Clathrin-associated protein complexes are believed to interact with the cytoplasmic tails of membrane proteins, leading to their selection and concentration. AP2S1/AP17 is a subunit of the plasma membrane adaptor. The complex binds polyphosphoinositides. In Zea mays (Maize), this protein is AP-2 complex subunit sigma (AP-17).